Here is a 572-residue protein sequence, read N- to C-terminus: Sulfite reductase [NADPH] hemoprotein beta-component (572 aa).

[4Fe-4S] cluster is bound by residues cysteine 437, cysteine 443, cysteine 482, and cysteine 486. Residue cysteine 486 coordinates siroheme.

Belongs to the nitrite and sulfite reductase 4Fe-4S domain family. Alpha(8)-beta(8). The alpha component is a flavoprotein, the beta component is a hemoprotein. Siroheme is required as a cofactor. The cofactor is [4Fe-4S] cluster.

It carries out the reaction hydrogen sulfide + 3 NADP(+) + 3 H2O = sulfite + 3 NADPH + 4 H(+). The protein operates within sulfur metabolism; hydrogen sulfide biosynthesis; hydrogen sulfide from sulfite (NADPH route): step 1/1. Functionally, component of the sulfite reductase complex that catalyzes the 6-electron reduction of sulfite to sulfide. This is one of several activities required for the biosynthesis of L-cysteine from sulfate. The chain is Sulfite reductase [NADPH] hemoprotein beta-component from Bacillus licheniformis (strain ATCC 14580 / DSM 13 / JCM 2505 / CCUG 7422 / NBRC 12200 / NCIMB 9375 / NCTC 10341 / NRRL NRS-1264 / Gibson 46).